The sequence spans 40 residues: MDWRLIVVLAPILLAGGWAVFNIGKAALEQINRALKGDQA.

A helical transmembrane segment spans residues 5–23; that stretch reads LIVVLAPILLAGGWAVFNI.

The protein belongs to the PsbY family. As to quaternary structure, PSII is composed of 1 copy each of membrane proteins PsbA, PsbB, PsbC, PsbD, PsbE, PsbF, PsbH, PsbI, PsbJ, PsbK, PsbL, PsbM, PsbT, PsbX, PsbY, PsbZ, Psb30/Ycf12, peripheral proteins PsbO, CyanoQ (PsbQ), PsbU, PsbV and a large number of cofactors. It forms dimeric complexes.

Its subcellular location is the cellular thylakoid membrane. In terms of biological role, loosely associated component of the core of photosystem II (PSII), it is not always seen in crystals. PSII is a light-driven water plastoquinone oxidoreductase, using light energy to abstract electrons from H(2)O, generating a proton gradient subsequently used for ATP formation. This Synechococcus elongatus (strain ATCC 33912 / PCC 7942 / FACHB-805) (Anacystis nidulans R2) protein is Photosystem II reaction center protein Y.